Here is a 291-residue protein sequence, read N- to C-terminus: 33 kDa chaperonin (291 aa).

Cystine bridges form between Cys229–Cys231 and Cys262–Cys265.

It belongs to the HSP33 family. Under oxidizing conditions two disulfide bonds are formed involving the reactive cysteines. Under reducing conditions zinc is bound to the reactive cysteines and the protein is inactive.

The protein resides in the cytoplasm. Redox regulated molecular chaperone. Protects both thermally unfolding and oxidatively damaged proteins from irreversible aggregation. Plays an important role in the bacterial defense system toward oxidative stress. In Vibrio cholerae serotype O1 (strain ATCC 39315 / El Tor Inaba N16961), this protein is 33 kDa chaperonin.